A 197-amino-acid polypeptide reads, in one-letter code: TLE family member 5 (197 aa).

The tract at residues 166–197 is CCN domain; it reads LSALGSQTHLSKEDKNGHDGDTHQEDDGEKSD. The disordered stretch occupies residues 170 to 197; it reads GSQTHLSKEDKNGHDGDTHQEDDGEKSD. The span at 175–197 shows a compositional bias: basic and acidic residues; it reads LSKEDKNGHDGDTHQEDDGEKSD. Ser196 carries the post-translational modification Phosphoserine.

Belongs to the WD repeat Groucho/TLE family. As to quaternary structure, homooligomer and heterooligomer with other family members. Binds TCF7 and the NF-kappa-B subunit RELA. Interacts with PHF12. Interacts (via Q domain) with SIX3. Interacts with SIX6. Ubiquitinated by XIAP/BIRC4. Ubiquitously expressed in developing embryos by midgestation, a wide expression is conserved in adult. In mouse, abundantly expressed in muscle, heart and brain.

The protein resides in the nucleus. Functionally, transcriptional corepressor. Acts as a dominant repressor towards other family members. Inhibits NF-kappa-B-regulated gene expression. May be required for the initiation and maintenance of the differentiated state. Essential for the transcriptional repressor activity of SIX3 during retina and lens development. This is TLE family member 5 from Mus musculus (Mouse).